The primary structure comprises 484 residues: Protein nucleotidyltransferase YdiU (484 aa).

Residues G81, G83, R84, K103, D115, G116, R166, and R173 each contribute to the ATP site. Residue D244 is the Proton acceptor of the active site. 2 residues coordinate Mg(2+): N245 and D254. Residue D254 coordinates ATP.

The protein belongs to the SELO family. Requires Mg(2+) as cofactor. Mn(2+) serves as cofactor.

It carries out the reaction L-seryl-[protein] + ATP = 3-O-(5'-adenylyl)-L-seryl-[protein] + diphosphate. It catalyses the reaction L-threonyl-[protein] + ATP = 3-O-(5'-adenylyl)-L-threonyl-[protein] + diphosphate. The enzyme catalyses L-tyrosyl-[protein] + ATP = O-(5'-adenylyl)-L-tyrosyl-[protein] + diphosphate. The catalysed reaction is L-histidyl-[protein] + UTP = N(tele)-(5'-uridylyl)-L-histidyl-[protein] + diphosphate. It carries out the reaction L-seryl-[protein] + UTP = O-(5'-uridylyl)-L-seryl-[protein] + diphosphate. It catalyses the reaction L-tyrosyl-[protein] + UTP = O-(5'-uridylyl)-L-tyrosyl-[protein] + diphosphate. Nucleotidyltransferase involved in the post-translational modification of proteins. It can catalyze the addition of adenosine monophosphate (AMP) or uridine monophosphate (UMP) to a protein, resulting in modifications known as AMPylation and UMPylation. The sequence is that of Protein nucleotidyltransferase YdiU from Shewanella putrefaciens (strain CN-32 / ATCC BAA-453).